The primary structure comprises 303 residues: Probable cell division protein WhiA (303 aa).

Residues 272-303 constitute a DNA-binding region (H-T-H motif); that stretch reads SIQQVADALEFPITKSGVNHRLRKINKIADDL.

The protein belongs to the WhiA family.

In terms of biological role, involved in cell division and chromosome segregation. This chain is Probable cell division protein WhiA, found in Streptococcus pyogenes serotype M1.